The primary structure comprises 420 residues: Subtilisin (420 aa).

The N-terminal stretch at 1-31 (MKRSGKIFTTAMLAVTLMMPAMGVSANEGNA) is a signal peptide. A propeptide spanning residues 32–111 (AAEGNEKFRV…DKPEALYNAM (80 aa)) is cleaved from the precursor. Gln115 is a binding site for Ca(2+). A Peptidase S8 domain is found at 118–420 (PWGIKAIYNN…ASGFGFATVQ (303 aa)). The active-site Charge relay system is the Asp145. Position 154 (Asp154) interacts with Ca(2+). Catalysis depends on charge relay system residues His182 and Ser360.

Belongs to the peptidase S8 family. The cofactor is Ca(2+).

Its subcellular location is the secreted. It carries out the reaction Hydrolysis of proteins with broad specificity for peptide bonds, and a preference for a large uncharged residue in P1. Hydrolyzes peptide amides.. Its function is as follows. Subtilisin is an extracellular alkaline serine protease, it catalyzes the hydrolysis of proteins and peptide amides. This chain is Subtilisin (sub1), found in Bacillus sp. (strain TA39).